The primary structure comprises 117 residues: Immunoglobulin heavy variable 4-4 (117 aa).

Positions 1–19 (MKHLWFFLLLVAAPRWVLS) are cleaved as a signal peptide. Residues 20–44 (QVQLQESGPGLVKPSGTLSLTCAVS) form a framework-1 region. Positions 20–117 (QVQLQESGPG…ADTAVYYCAR (98 aa)) constitute an Ig-like domain. A disulfide bridge connects residues Cys-41 and Cys-115. Residues 45–53 (GGSISSSNW) are complementarity-determining-1. The tract at residues 54–70 (WSWVRQPPGKGLEWIGE) is framework-2. Positions 71–77 (IYHSGST) are complementarity-determining-2. Residues 78–115 (NYNPSLKSRVTISVDKSKNQFSLKLSSVTAADTAVYYC) are framework-3. Positions 116–117 (AR) are complementarity-determining-3.

As to quaternary structure, immunoglobulins are composed of two identical heavy chains and two identical light chains; disulfide-linked.

The protein localises to the secreted. Its subcellular location is the cell membrane. Its function is as follows. V region of the variable domain of immunoglobulin heavy chains that participates in the antigen recognition. Immunoglobulins, also known as antibodies, are membrane-bound or secreted glycoproteins produced by B lymphocytes. In the recognition phase of humoral immunity, the membrane-bound immunoglobulins serve as receptors which, upon binding of a specific antigen, trigger the clonal expansion and differentiation of B lymphocytes into immunoglobulins-secreting plasma cells. Secreted immunoglobulins mediate the effector phase of humoral immunity, which results in the elimination of bound antigens. The antigen binding site is formed by the variable domain of one heavy chain, together with that of its associated light chain. Thus, each immunoglobulin has two antigen binding sites with remarkable affinity for a particular antigen. The variable domains are assembled by a process called V-(D)-J rearrangement and can then be subjected to somatic hypermutations which, after exposure to antigen and selection, allow affinity maturation for a particular antigen. The chain is Immunoglobulin heavy variable 4-4 from Homo sapiens (Human).